Here is an 820-residue protein sequence, read N- to C-terminus: G-type lectin S-receptor-like serine/threonine-protein kinase At1g11300 (820 aa).

The first 26 residues, 1 to 26, serve as a signal peptide directing secretion; that stretch reads MRLHESSSPFVCILVLSCFFLSVSLA. Residues 27–150 form the Bulb-type lectin domain; that stretch reads QERAFFSGKL…SSDAYLWESF (124 aa). Over 27–436 the chain is Extracellular; that stretch reads QERAFFSGKL…SEIKTKDKRP (410 aa). N-linked (GlcNAc...) asparagine glycans are attached at residues Asn37, Asn58, Asn87, Asn115, Asn123, Asn173, Asn211, Asn247, Asn256, and Asn282. Residues 290-326 form the EGF-like; atypical domain; that stretch reads PATECDNYRRCGEFATCNPRKNPLCSCIRGFRPRNLI. Disulfide bonds link Cys294–Cys306 and Cys300–Cys314. Asn332 and Asn351 each carry an N-linked (GlcNAc...) asparagine glycan. A PAN domain is found at 345–425; that stretch reads CERQNNNGSA…SGLDLYIRLA (81 aa). Cystine bridges form between Cys379-Cys400 and Cys383-Cys389. N-linked (GlcNAc...) asparagine glycosylation occurs at Asn404. A helical membrane pass occupies residues 437–457; sequence ILIGTILAGGIFVVAACVLLA. The Cytoplasmic segment spans residues 458-820; the sequence is RRIVMKKRAK…NVTITDVTGR (363 aa). The Protein kinase domain maps to 509 to 788; it reads FSLRNKLGQG…DIPEPKQPAF (280 aa). Residues 515 to 523 and Lys537 contribute to the ATP site; that span reads LGQGGFGPV. Positions 598–615 are caM-binding; the sequence is RRAKLLDWKTRFNIINGI. The active-site Proton acceptor is Asp634.

Belongs to the protein kinase superfamily. Ser/Thr protein kinase family.

Its subcellular location is the cell membrane. It carries out the reaction L-seryl-[protein] + ATP = O-phospho-L-seryl-[protein] + ADP + H(+). The catalysed reaction is L-threonyl-[protein] + ATP = O-phospho-L-threonyl-[protein] + ADP + H(+). This Arabidopsis thaliana (Mouse-ear cress) protein is G-type lectin S-receptor-like serine/threonine-protein kinase At1g11300.